Consider the following 253-residue polypeptide: Histone-arginine methyltransferase METTL23 (253 aa).

The disordered stretch occupies residues 1-23 (MDSVRPRAPWAPPPDPASLDSPT).

It belongs to the methyltransferase superfamily. METTL23 family. In terms of assembly, interacts with HSPA5, HSP90B1, TUBULIN, UGGT1 and UGGT2. Interacts with TET3. Interacts with STPG4. As to expression, ubiquitously expressed.

The protein localises to the nucleus. It is found in the cytoplasm. It carries out the reaction L-arginyl-[protein] + 2 S-adenosyl-L-methionine = N(omega),N(omega)-dimethyl-L-arginyl-[protein] + 2 S-adenosyl-L-homocysteine + 2 H(+). In terms of biological role, histone methyltransferase that dimethylates histone H3 at 'Arg-17', forming asymmetric dimethylarginine (H3R17me2a), leading to activate transcription via chromatin remodeling. Maternal factor involved in epigenetic chromatin reprogramming of the paternal genome in the zygote: mediates H3R17me2a, promoting histone H3.3 incorporation in the male pronucleus, leading to TET3 recruitment and subsequent DNA demethylation. The polypeptide is Histone-arginine methyltransferase METTL23 (Mus musculus (Mouse)).